The following is a 321-amino-acid chain: Ribosomal RNA small subunit methyltransferase H (321 aa).

Residues 34–36, Asp54, Phe80, Asp102, and Gln109 contribute to the S-adenosyl-L-methionine site; that span reads GGH.

The protein belongs to the methyltransferase superfamily. RsmH family.

The protein resides in the cytoplasm. The enzyme catalyses cytidine(1402) in 16S rRNA + S-adenosyl-L-methionine = N(4)-methylcytidine(1402) in 16S rRNA + S-adenosyl-L-homocysteine + H(+). Its function is as follows. Specifically methylates the N4 position of cytidine in position 1402 (C1402) of 16S rRNA. In Blochmanniella floridana, this protein is Ribosomal RNA small subunit methyltransferase H.